The following is a 160-amino-acid chain: Protein-export protein SecB (160 aa).

The protein belongs to the SecB family. As to quaternary structure, homotetramer, a dimer of dimers. One homotetramer interacts with 1 SecA dimer.

It is found in the cytoplasm. In terms of biological role, one of the proteins required for the normal export of preproteins out of the cell cytoplasm. It is a molecular chaperone that binds to a subset of precursor proteins, maintaining them in a translocation-competent state. It also specifically binds to its receptor SecA. This Beijerinckia indica subsp. indica (strain ATCC 9039 / DSM 1715 / NCIMB 8712) protein is Protein-export protein SecB.